We begin with the raw amino-acid sequence, 449 residues long: MVYSQLQALKRNYYLDWLRNLHKGKPKTFAITFMGVKQICTIEGENLKAIQATNFKDFGLEPMRRKTKGAMPFADKGISTTDGKNWEFARFLVKPFFYREVYASIDRVDPYVRKLFGLLPEEDGVTFDIQPLIQRWFLDLTSEFIFGKTMDSMTYPDRANITWTMLDVLRGGRLRIQMYKFLWAFNWNWWLKAVYEVHDFVNVHIRSTYKELAAREQRIRDGLPVGPERVDLLWYMATHVRDEEELRSQLCLVFVPNNDTTSIFISNCIWHLARDHEAWQKLRKEVLDYGDQPITFESLRSMPYLNGVLNETHRLTPNNIVQVRACLNDSVLPLGGGPDGKSPLYVNKGDLVSVTKTVMYRDPDIWGPDVDVFRPERFFGVRGNWNFLPFGGGPRRCPAQMMVQTESAYMLFQLAKRYSRLECRDPEPYTAVMRIGPSNINGVKIAFYK.

The helical transmembrane segment at 28 to 44 (TFAITFMGVKQICTIEG) threads the bilayer. Position 397 (Cys-397) interacts with heme.

It belongs to the cytochrome P450 family. Heme serves as cofactor.

Its subcellular location is the membrane. It catalyses the reaction (3E,5S)-3-[(2E,4E,8S,10E,12Z)-1-hydroxy-4,8-dimethyltetradeca-2,4,10,12-tetraen-1-ylidene]-5-[(4-hydroxyphenyl)methyl]pyrrolidine-2,4-dione + reduced [NADPH--hemoprotein reductase] + O2 = 3-[(2E,4E,8S,10E,12Z)-4,8-dimethyltetradeca-2,4,10,12-tetraenoyl]-4-hydroxy-5-(4-hydroxyphenyl)-1,2-dihydropyridin-2-one + oxidized [NADPH--hemoprotein reductase] + 2 H2O. Its pathway is mycotoxin biosynthesis. Cytochrome P450 monooxygenase; part of the gene cluster that mediates the biosynthesis of ilicicolin H, a 4-hydroxy-2-pyridonealkaloid that has potent and broad antifungal activities by inhibiting the mitochondrial respiration chain. IliC catalyzes the ring expansion of the tetramate intermediate to the acyclic 2-pyridone intermediate that contains the trans bis-diene chain. The biosynthesis of ilicicolin H starts with formation of the tetramic acid by the hybrid PKS-NRPS synthetase iliA with the partnering trans-enoyl reductase iliB since iliA lacks a designated enoylreductase (ER) domain. The cytochrome P450 monooxygenase iliC then catalyzes the ring expansion of the tetramate to the acyclic 2-pyridone. The pericyclase iliD further converts the acyclic 2-pyridone into 8-epi-ilicicolin H. 8-epi-ilicicolin H might then spontaneously convert to ilicicolin H since ilicicolin H is produced in the absence of the epimerase iliE, in contrast to what was observed for the Talaromyces variabilis ilicolin H biosynthetic pathway. This Hypocrea jecorina (strain QM6a) (Trichoderma reesei) protein is Cytochrome P450 monooxygenase iliC.